The sequence spans 620 residues: 1-deoxy-D-xylulose-5-phosphate synthase (620 aa).

Thiamine diphosphate contacts are provided by residues H80 and 121–123; that span reads GHS. D152 provides a ligand contact to Mg(2+). Thiamine diphosphate is bound by residues 153–154, N181, Y288, and E370; that span reads GA. N181 is a Mg(2+) binding site.

It belongs to the transketolase family. DXPS subfamily. Homodimer. It depends on Mg(2+) as a cofactor. Thiamine diphosphate is required as a cofactor.

The enzyme catalyses D-glyceraldehyde 3-phosphate + pyruvate + H(+) = 1-deoxy-D-xylulose 5-phosphate + CO2. It functions in the pathway metabolic intermediate biosynthesis; 1-deoxy-D-xylulose 5-phosphate biosynthesis; 1-deoxy-D-xylulose 5-phosphate from D-glyceraldehyde 3-phosphate and pyruvate: step 1/1. Functionally, catalyzes the acyloin condensation reaction between C atoms 2 and 3 of pyruvate and glyceraldehyde 3-phosphate to yield 1-deoxy-D-xylulose-5-phosphate (DXP). The polypeptide is 1-deoxy-D-xylulose-5-phosphate synthase (Cronobacter sakazakii (strain ATCC BAA-894) (Enterobacter sakazakii)).